The sequence spans 78 residues: Acyl carrier protein (78 aa).

One can recognise a Carrier domain in the interval 2-77 (DNIVERVKKI…QAVDYILAGK (76 aa)). Position 37 is an O-(pantetheine 4'-phosphoryl)serine (S37).

This sequence belongs to the acyl carrier protein (ACP) family. 4'-phosphopantetheine is transferred from CoA to a specific serine of apo-ACP by AcpS. This modification is essential for activity because fatty acids are bound in thioester linkage to the sulfhydryl of the prosthetic group.

The protein localises to the cytoplasm. It participates in lipid metabolism; fatty acid biosynthesis. In terms of biological role, carrier of the growing fatty acid chain in fatty acid biosynthesis. The chain is Acyl carrier protein from Dechloromonas aromatica (strain RCB).